A 245-amino-acid chain; its full sequence is Leucyl/phenylalanyl-tRNA--protein transferase (245 aa).

This sequence belongs to the L/F-transferase family.

It is found in the cytoplasm. The catalysed reaction is N-terminal L-lysyl-[protein] + L-leucyl-tRNA(Leu) = N-terminal L-leucyl-L-lysyl-[protein] + tRNA(Leu) + H(+). It carries out the reaction N-terminal L-arginyl-[protein] + L-leucyl-tRNA(Leu) = N-terminal L-leucyl-L-arginyl-[protein] + tRNA(Leu) + H(+). The enzyme catalyses L-phenylalanyl-tRNA(Phe) + an N-terminal L-alpha-aminoacyl-[protein] = an N-terminal L-phenylalanyl-L-alpha-aminoacyl-[protein] + tRNA(Phe). In terms of biological role, functions in the N-end rule pathway of protein degradation where it conjugates Leu, Phe and, less efficiently, Met from aminoacyl-tRNAs to the N-termini of proteins containing an N-terminal arginine or lysine. This is Leucyl/phenylalanyl-tRNA--protein transferase from Paraburkholderia phytofirmans (strain DSM 17436 / LMG 22146 / PsJN) (Burkholderia phytofirmans).